The chain runs to 638 residues: Broad-specificity ulvan lyase (638 aa).

Residues 1-27 (MKRRNFIQLSSLATIGMSLPSAGIVNA) form the signal peptide.

This sequence belongs to the polysaccharide lyase 37 family.

It is found in the periplasm. The enzyme catalyses Endolytic cleavage of (1-&gt;4)-beta-galactosaminic bonds between N-acetylgalactosamine and either D-glucuronic acid or L-iduronic acid to produce a mixture of Delta(4)-unsaturated oligosaccharides of different sizes that are ultimately degraded to Delta(4)-unsaturated tetra- and disaccharides.. It catalyses the reaction Elimination of sulfate, appears to act on linkages between N-acetyl-D-glucosamine and uronate. Product is an unsaturated sugar.. Broad-specificity lyase involved in ulvan degradation. Ulvan is the main polysaccharide component of the Ulvales (green seaweed) cell wall. It is composed of disaccharide building blocks comprising 3-sulfated rhamnose (Rha3S) linked to D-glucuronic acid (GlcA), L-iduronic acid (IduA), or D-xylose (Xyl). Ulvan lyase catalyzes the endolytic cleavage of the glycosidic bond between Rha3S and the uronic acids GlcA or IduA, producing oligosaccharides that have unsaturated 4-deoxy-L-threo-hex-4-enopyranosiduronic acid (deltaUA) at the non-reducing end. This results eventually in the degradation of the ulvan polysaccharide into deltaUA-Rha3S disaccharides and deltaUA-Rha3S-Xyl-Rha3S tetrasaccharides. It is also able to degrade the glycosaminoglycans heparan sulfate and chondroitin sulfate. Not active against pectin, xanthan or alginate. This is Broad-specificity ulvan lyase from Formosa agariphila (strain DSM 15362 / KCTC 12365 / LMG 23005 / KMM 3901 / M-2Alg 35-1).